We begin with the raw amino-acid sequence, 352 residues long: N-terminal EF-hand calcium-binding protein 1 (352 aa).

S4 is modified (phosphoserine). EF-hand domains are found at residues 26–61 and 60–95; these read KGMSIFLDILRRADKNDDGKLSFEEFKAYFADGVLS and LSGEELHELFHTIDTHNTNNLDTEELCEYFSQHLGE. Residues D39, N41, D43, K45, and E50 each contribute to the Ca(2+) site. The stretch at 135–163 forms a coiled coil; that stretch reads LLKETLNQLQSLQNSLECAMETTEEQTRQ. The disordered stretch occupies residues 155 to 202; it reads ETTEEQTRQERQGPSKPEVLSIQWPGKRSSRRVQRHNSFSPNSPQFNV. Positions 190-202 are enriched in polar residues; that stretch reads HNSFSPNSPQFNV. A phosphoserine mark is found at S192 and S197. Residues 209–275 adopt a coiled-coil conformation; that stretch reads EEDNQWMTQI…EEFQLALKHY (67 aa). The region spanning 252–340 is the ABM domain; the sequence is MLVQRQMSVT…LETPELTSTM (89 aa).

As to quaternary structure, interacts with STX1. May interact with CPNE6.

It is found in the cytoplasm. The polypeptide is N-terminal EF-hand calcium-binding protein 1 (Necab1) (Rattus norvegicus (Rat)).